Reading from the N-terminus, the 208-residue chain is N-(5'-phosphoribosyl)anthranilate isomerase (208 aa).

This sequence belongs to the TrpF family.

It catalyses the reaction N-(5-phospho-beta-D-ribosyl)anthranilate = 1-(2-carboxyphenylamino)-1-deoxy-D-ribulose 5-phosphate. It participates in amino-acid biosynthesis; L-tryptophan biosynthesis; L-tryptophan from chorismate: step 3/5. This Methanococcus maripaludis (strain C7 / ATCC BAA-1331) protein is N-(5'-phosphoribosyl)anthranilate isomerase.